Consider the following 417-residue polypeptide: DNA-directed RNA polymerase subunit beta (417 aa).

Belongs to the RNA polymerase beta chain family. As to quaternary structure, in plastids the minimal PEP RNA polymerase catalytic core is composed of four subunits: alpha, beta, beta', and beta''. When a (nuclear-encoded) sigma factor is associated with the core the holoenzyme is formed, which can initiate transcription.

It is found in the plastid. The protein resides in the chloroplast. The enzyme catalyses RNA(n) + a ribonucleoside 5'-triphosphate = RNA(n+1) + diphosphate. Functionally, DNA-dependent RNA polymerase catalyzes the transcription of DNA into RNA using the four ribonucleoside triphosphates as substrates. This Saponaria officinalis (Common soapwort) protein is DNA-directed RNA polymerase subunit beta (rpoB).